A 274-amino-acid polypeptide reads, in one-letter code: NH(3)-dependent NAD(+) synthetase (274 aa).

46 to 53 (GISGGQDS) serves as a coordination point for ATP. Asp-52 contacts Mg(2+). Arg-140 is a binding site for deamido-NAD(+). ATP is bound at residue Thr-160. Glu-165 contributes to the Mg(2+) binding site. Deamido-NAD(+)-binding residues include Lys-173 and Asp-180. Residues Lys-189 and Thr-211 each coordinate ATP. Residue 260–261 (HK) coordinates deamido-NAD(+).

It belongs to the NAD synthetase family. As to quaternary structure, homodimer.

It catalyses the reaction deamido-NAD(+) + NH4(+) + ATP = AMP + diphosphate + NAD(+) + H(+). Its pathway is cofactor biosynthesis; NAD(+) biosynthesis; NAD(+) from deamido-NAD(+) (ammonia route): step 1/1. Catalyzes the ATP-dependent amidation of deamido-NAD to form NAD. Uses ammonia as a nitrogen source. This chain is NH(3)-dependent NAD(+) synthetase, found in Pectobacterium carotovorum subsp. carotovorum (strain PC1).